The following is a 160-amino-acid chain: Cytochrome b6-f complex subunit 4 (160 aa).

Helical transmembrane passes span 36-56 (LLYI…GLAV), 95-115 (LLGV…PFLE), and 131-151 (TVFL…TLPI).

The protein belongs to the cytochrome b family. PetD subfamily. In terms of assembly, the 4 large subunits of the cytochrome b6-f complex are cytochrome b6, subunit IV (17 kDa polypeptide, petD), cytochrome f and the Rieske protein, while the 4 small subunits are petG, petL, petM and petN. The complex functions as a dimer.

It is found in the plastid. It localises to the chloroplast thylakoid membrane. In terms of biological role, component of the cytochrome b6-f complex, which mediates electron transfer between photosystem II (PSII) and photosystem I (PSI), cyclic electron flow around PSI, and state transitions. The polypeptide is Cytochrome b6-f complex subunit 4 (Amborella trichopoda).